The primary structure comprises 299 residues: tRNA dimethylallyltransferase (299 aa).

13–20 is a binding site for ATP; it reads GPTASGKT. Residue 15–20 coordinates substrate; that stretch reads TASGKT. Positions 38-41 are interaction with substrate tRNA; the sequence is DSRQ.

The protein belongs to the IPP transferase family. Monomer. Mg(2+) is required as a cofactor.

It carries out the reaction adenosine(37) in tRNA + dimethylallyl diphosphate = N(6)-dimethylallyladenosine(37) in tRNA + diphosphate. Its function is as follows. Catalyzes the transfer of a dimethylallyl group onto the adenine at position 37 in tRNAs that read codons beginning with uridine, leading to the formation of N6-(dimethylallyl)adenosine (i(6)A). This is tRNA dimethylallyltransferase from Prochlorococcus marinus (strain MIT 9301).